A 183-amino-acid polypeptide reads, in one-letter code: Negative modulator of initiation of replication (183 aa).

Positions 118–122 (RTRIY) are interaction with DNA.

This sequence belongs to the SeqA family. In terms of assembly, homodimer. Polymerizes to form helical filaments.

The protein localises to the cytoplasm. Negative regulator of replication initiation, which contributes to regulation of DNA replication and ensures that replication initiation occurs exactly once per chromosome per cell cycle. Binds to pairs of hemimethylated GATC sequences in the oriC region, thus preventing assembly of replication proteins and re-initiation at newly replicated origins. Repression is relieved when the region becomes fully methylated. The protein is Negative modulator of initiation of replication of Proteus mirabilis (strain HI4320).